The sequence spans 279 residues: tRNA pseudouridine synthase B (279 aa).

D38 serves as the catalytic Nucleophile.

Belongs to the pseudouridine synthase TruB family. Type 1 subfamily.

It carries out the reaction uridine(55) in tRNA = pseudouridine(55) in tRNA. Its function is as follows. Responsible for synthesis of pseudouridine from uracil-55 in the psi GC loop of transfer RNAs. The polypeptide is tRNA pseudouridine synthase B (Acholeplasma laidlawii (strain PG-8A)).